Reading from the N-terminus, the 172-residue chain is NADH-quinone oxidoreductase subunit B (172 aa).

[4Fe-4S] cluster contacts are provided by C52, C53, C117, and C147.

This sequence belongs to the complex I 20 kDa subunit family. As to quaternary structure, NDH-1 is composed of 14 different subunits. Subunits NuoB, C, D, E, F, and G constitute the peripheral sector of the complex. [4Fe-4S] cluster serves as cofactor.

The protein resides in the cell inner membrane. The enzyme catalyses a quinone + NADH + 5 H(+)(in) = a quinol + NAD(+) + 4 H(+)(out). In terms of biological role, NDH-1 shuttles electrons from NADH, via FMN and iron-sulfur (Fe-S) centers, to quinones in the respiratory chain. Couples the redox reaction to proton translocation (for every two electrons transferred, four hydrogen ions are translocated across the cytoplasmic membrane), and thus conserves the redox energy in a proton gradient. The chain is NADH-quinone oxidoreductase subunit B from Ehrlichia ruminantium (strain Gardel).